We begin with the raw amino-acid sequence, 633 residues long: MSSCGACTCGAAAARLLTTSLTSAQRGISCGRIHVPVLGRLGTLDTQILRRAPLRTFSETPAYFASKDGTNKDGSGDGNKKSVTEGSSKKSGSGNSGKGGNQLRCPKCGDLCTHVETFVSSTRFVKCEKCHHFFVVLSEADSKKSIIKEPESAAEAVKLAFQQKPPPPPKKIYNYLDKYVVGQSFAKKVLSVAVYNHYKRIYNNIPANLRQQAEVEKQTSLTPRELEIRRREDEYRFTKLLQIAGISPHGNALGASMQQQGSQQMPQEKRGGEVLDSPHDDIKLEKSNILLLGPTGSGKTLLAQTLAKCLDVPFAICDCTTLTQAGYVGEDIESVIAKLLQDANYNVEKAQQGIVFLDEVDKIGSVPGIHQLRDVGGEGVQQGLLKLLEGTIVNVPEKNSRKLRGETVQVDTTNILFVASGAFNGLDRIISRRKNEKYLGFGTPSNLGKGRRAAAAADLANRSGESNTHQDIEEKDRLLRHVEARDLIEFGMIPEFVGRLPVVVPLHSLDEKTLVQILTEPRNAVIPQYQALFSMDKCELNVTEDALKAIARLALERKTGARGLRSIMEKLLLEPMFEVPNSDIVCVEVDKEVVEGKKEPGYIRAPSKESSEEDYDSGVEEDGWPRQADAANS.

The N-terminal 56 residues, 1–56 (MSSCGACTCGAAAARLLTTSLTSAQRGISCGRIHVPVLGRLGTLDTQILRRAPLRT), are a transit peptide targeting the mitochondrion. A disordered region spans residues 65-101 (ASKDGTNKDGSGDGNKKSVTEGSSKKSGSGNSGKGGN). Positions 69-83 (GTNKDGSGDGNKKSV) are enriched in basic and acidic residues. The segment covering 84 to 93 (TEGSSKKSGS) has biased composition (low complexity). One can recognise a ClpX-type ZB domain in the interval 93–146 (SGNSGKGGNQLRCPKCGDLCTHVETFVSSTRFVKCEKCHHFFVVLSEADSKKSI). 4 residues coordinate Zn(2+): Cys-105, Cys-108, Cys-127, and Cys-130. Residue 294–301 (PTGSGKTL) participates in ATP binding. Position 437 is an N6-acetyllysine (Lys-437). Over residues 598-610 (KEPGYIRAPSKES) the composition is skewed to basic and acidic residues. The segment at 598 to 633 (KEPGYIRAPSKESSEEDYDSGVEEDGWPRQADAANS) is disordered. Over residues 611 to 622 (SEEDYDSGVEED) the composition is skewed to acidic residues. Position 617 is a phosphoserine (Ser-617).

This sequence belongs to the ClpX chaperone family. Homohexamer that forms a ring structure; this hexamerization requires ATP binding. Component of the ClpXP complex formed by the assembly of two CLPP heptameric rings with two CLPX hexameric rings, giving rise to a symmetrical structure with two central CLPP rings flanked by a CLPX ring at either end of the complex. Interacts with TFAM.

It is found in the mitochondrion. Its subcellular location is the mitochondrion matrix. The protein localises to the mitochondrion nucleoid. It carries out the reaction ATP + H2O = ADP + phosphate + H(+). ATP-dependent chaperone that functions as an unfoldase. As part of the ClpXP protease complex, it recognizes specific protein substrates, unfolds them using energy derived from ATP hydrolysis, and then translocates them to the proteolytic subunit (CLPP) of the ClpXP complex for degradation. Thanks to its chaperone activity, it also functions in the incorporation of the pyridoxal phosphate cofactor into 5-aminolevulinate synthase, thereby activating 5-aminolevulinate (ALA) synthesis, the first step in heme biosynthesis. This chaperone is also involved in the control of mtDNA nucleoid distribution, by regulating mitochondrial transcription factor A (TFAM) activity. This Rattus norvegicus (Rat) protein is ATP-dependent clpX-like chaperone, mitochondrial.